Consider the following 301-residue polypeptide: 4-hydroxy-tetrahydrodipicolinate synthase (301 aa).

Thr46 lines the pyruvate pocket. The active-site Proton donor/acceptor is the Tyr134. Lys162 functions as the Schiff-base intermediate with substrate in the catalytic mechanism. Ile203 provides a ligand contact to pyruvate.

The protein belongs to the DapA family. In terms of assembly, homotetramer; dimer of dimers.

The protein localises to the cytoplasm. It carries out the reaction L-aspartate 4-semialdehyde + pyruvate = (2S,4S)-4-hydroxy-2,3,4,5-tetrahydrodipicolinate + H2O + H(+). The protein operates within amino-acid biosynthesis; L-lysine biosynthesis via DAP pathway; (S)-tetrahydrodipicolinate from L-aspartate: step 3/4. Its function is as follows. Catalyzes the condensation of (S)-aspartate-beta-semialdehyde [(S)-ASA] and pyruvate to 4-hydroxy-tetrahydrodipicolinate (HTPA). In Anaplasma marginale (strain Florida), this protein is 4-hydroxy-tetrahydrodipicolinate synthase.